A 545-amino-acid chain; its full sequence is La-related protein 6B (545 aa).

The span at 1–10 (MADQQTLDSS) shows a compositional bias: polar residues. 3 disordered regions span residues 1-76 (MADQ…IPPP), 105-187 (LVPV…DSKT), and 382-545 (HQTK…VQAE). The segment covering 23-49 (SHSTSSTTSASSSSDPSLLRSLSLSRL) has biased composition (low complexity). The segment covering 61–76 (TTPPLPQPPRMIIPPP) has biased composition (pro residues). The span at 111-126 (HHPHHRFHQHHHHNRH) shows a compositional bias: basic residues. A compositionally biased stretch (basic and acidic residues) spans 154–173 (LVSKKNDRRDHSKRESKNDQ). The segment covering 174 to 185 (VTETGASVSIDS) has biased composition (polar residues). The HTH La-type RNA-binding domain maps to 187-278 (TGLPEDSIQK…RRISPITESA (92 aa)). Residues 285 to 383 (RIIVAENLPE…LKVRLMLKHQ (99 aa)) enclose the RRM domain. A compositionally biased stretch (basic residues) spans 448 to 464 (GQRKGRNRGRGKGRGRG). Over residues 465–478 (QPHQNQNQNNNHSH) the composition is skewed to low complexity. The segment covering 479 to 497 (NQNHNHNGRGNHHHHHHHQ) has biased composition (basic residues). Over residues 498–509 (VGTQPSNNPMNN) the composition is skewed to polar residues. Over residues 510 to 519 (MEQPGMGKQQ) the composition is skewed to low complexity.

The protein resides in the nucleus. Transcriptional regulator. The chain is La-related protein 6B (LARP6B) from Arabidopsis thaliana (Mouse-ear cress).